The chain runs to 823 residues: MGGRVFLVFLAFCVWLTLPGAETQDSRGCARWCPQDSSCVNATACRCNPGFSSFSEIITTPMETCDDINECATLSKVSCGKFSDCWNTEGSYDCVCSPGYEPVSGAKTFKNESENTCQDVDECQQNPRLCKSYGTCVNTLGSYTCQCLPGFKLKPEDPKLCTDVNECTSGQNPCHSSTHCLNNVGSYQCRCRPGWQPIPGSPNGPNNTVCEDVDECSSGQHQCDSSTVCFNTVGSYSCRCRPGWKPRHGIPNNQKDTVCEDMTFSTWTPPPGVHSQTLSRFFDKVQDLGRDYKPGLANNTIQSILQALDELLEAPGDLETLPRLQQHCVASHLLDGLEDVLRGLSKNLSNGLLNFSYPAGTELSLEVQKQVDRSVTLRQNQAVMQLDWNQAQKSGDPGPSVVGLVSIPGMGKLLAEAPLVLEPEKQMLLHETHQGLLQDGSPILLSDVISAFLSNNDTQNLSSPVTFTFSHRSVIPRQKVLCVFWEHGQNGCGHWATTGCSTIGTRDTSTICRCTHLSSFAVLMAHYDVQEEDPVLTVITYMGLSVSLLCLLLAALTFLLCKAIQNTSTSLHLQLSLCLFLAHLLFLVAIDQTGHKVLCSIIAGTLHYLYLATLTWMLLEALYLFLTARNLTVVNYSSINRFMKKLMFPVGYGVPAVTVAISAASRPHLYGTPSRCWLQPEKGFIWGFLGPVCAIFSVNLVLFLVTLWILKNRLSSLNSEVSTLRNTRMLAFKATAQLFILGCTWCLGILQVGPAARVMAYLFTIINSLQGVFIFLVYCLLSQQVREQYGKWSKGIRKLKTESEMHTLSSSAKADTSKPSTVN.

A signal peptide spans 1–23 (MGGRVFLVFLAFCVWLTLPGAET). Residues 24 to 540 (QDSRGCARWC…EEDPVLTVIT (517 aa)) are Extracellular-facing. An EGF-like 1 domain is found at 25–66 (DSRGCARWCPQDSSCVNATACRCNPGFSSFSEIITTPMETCD). 15 cysteine pairs are disulfide-bonded: Cys-29-Cys-39, Cys-33-Cys-45, Cys-47-Cys-65, Cys-71-Cys-85, Cys-79-Cys-94, Cys-96-Cys-117, Cys-123-Cys-136, Cys-130-Cys-145, Cys-147-Cys-161, Cys-167-Cys-180, Cys-174-Cys-189, Cys-191-Cys-210, Cys-216-Cys-229, Cys-223-Cys-238, and Cys-240-Cys-259. Asn-41 carries an N-linked (GlcNAc...) asparagine glycan. An EGF-like 2; calcium-binding domain is found at 67-118 (DINECATLSKVSCGKFSDCWNTEGSYDCVCSPGYEPVSGAKTFKNESENTCQ). An N-linked (GlcNAc...) asparagine glycan is attached at Asn-111. Positions 119–162 (DVDECQQNPRLCKSYGTCVNTLGSYTCQCLPGFKLKPEDPKLCT) constitute an EGF-like 3; calcium-binding domain. Positions 163–211 (DVNECTSGQNPCHSSTHCLNNVGSYQCRCRPGWQPIPGSPNGPNNTVCE) constitute an EGF-like 4; calcium-binding domain. The N-linked (GlcNAc...) asparagine glycan is linked to Asn-206. An EGF-like 5; calcium-binding domain is found at 212 to 260 (DVDECSSGQHQCDSSTVCFNTVGSYSCRCRPGWKPRHGIPNNQKDTVCE). Residues Asn-298, Asn-347, Asn-354, Asn-456, and Asn-460 are each glycosylated (N-linked (GlcNAc...) asparagine). The 177-residue stretch at 354–530 (NFSYPAGTEL…AVLMAHYDVQ (177 aa)) folds into the GAIN-B domain. 2 cysteine pairs are disulfide-bonded: Cys-482-Cys-512 and Cys-500-Cys-514. A GPS region spans residues 482 to 530 (CVFWEHGQNGCGHWATTGCSTIGTRDTSTICRCTHLSSFAVLMAHYDVQ). A helical transmembrane segment spans residues 541 to 561 (YMGLSVSLLCLLLAALTFLLC). Over 562-569 (KAIQNTST) the chain is Cytoplasmic. A helical transmembrane segment spans residues 570–590 (SLHLQLSLCLFLAHLLFLVAI). Over 591–605 (DQTGHKVLCSIIAGT) the chain is Extracellular. The chain crosses the membrane as a helical span at residues 606–626 (LHYLYLATLTWMLLEALYLFL). Over 627–644 (TARNLTVVNYSSINRFMK) the chain is Cytoplasmic. The chain crosses the membrane as a helical span at residues 645–665 (KLMFPVGYGVPAVTVAISAAS). Over 666–683 (RPHLYGTPSRCWLQPEKG) the chain is Extracellular. A helical membrane pass occupies residues 684–704 (FIWGFLGPVCAIFSVNLVLFL). Residues 705 to 735 (VTLWILKNRLSSLNSEVSTLRNTRMLAFKAT) lie on the Cytoplasmic side of the membrane. Residues 736-756 (AQLFILGCTWCLGILQVGPAA) form a helical membrane-spanning segment. Residues 757–760 (RVMA) are Extracellular-facing. Residues 761 to 781 (YLFTIINSLQGVFIFLVYCLL) traverse the membrane as a helical segment. The Cytoplasmic segment spans residues 782-823 (SQQVREQYGKWSKGIRKLKTESEMHTLSSSAKADTSKPSTVN).

The protein belongs to the G-protein coupled receptor 2 family. Adhesion G-protein coupled receptor (ADGR) subfamily. In terms of assembly, forms a heterodimer, consisting of a large extracellular region non-covalently linked to a seven-transmembrane moiety. Interacts with chondroitin sulfate; the interaction with chondroitin sulfate is calcium-dependent. Interacts with CD55. Post-translationally, autoproteolytically cleaved into 2 subunits, an extracellular alpha subunit and a seven-transmembrane beta subunit. In terms of tissue distribution, expression is restricted to myeloid cells. Highest expression was found in peripheral blood leukocytes, followed by spleen and lymph nodes, with intermediate to low levels in thymus, bone marrow, fetal liver, placenta, and lung, and no expression in heart, brain, skeletal muscle, kidney, or pancreas. Expression is also detected in monocyte/macrophage and Jurkat cell lines but not in other cell lines tested. High expression in mast cells.

It is found in the cell membrane. The protein resides in the cell projection. It localises to the ruffle membrane. Cell surface receptor that binds to the chondroitin sulfate moiety of glycosaminoglycan chains and promotes cell attachment. Promotes granulocyte chemotaxis, degranulation and adhesion. In macrophages, promotes the release of inflammatory cytokines, including IL8 and TNF. Signals probably through G-proteins. Is a regulator of mast cell degranulation. The sequence is that of Adhesion G protein-coupled receptor E2 from Homo sapiens (Human).